Here is an 874-residue protein sequence, read N- to C-terminus: Alanine--tRNA ligase (874 aa).

The Zn(2+) site is built by His-562, His-566, Cys-664, and His-668.

Belongs to the class-II aminoacyl-tRNA synthetase family. It depends on Zn(2+) as a cofactor.

The protein resides in the cytoplasm. The enzyme catalyses tRNA(Ala) + L-alanine + ATP = L-alanyl-tRNA(Ala) + AMP + diphosphate. Its function is as follows. Catalyzes the attachment of alanine to tRNA(Ala) in a two-step reaction: alanine is first activated by ATP to form Ala-AMP and then transferred to the acceptor end of tRNA(Ala). Also edits incorrectly charged Ser-tRNA(Ala) and Gly-tRNA(Ala) via its editing domain. The protein is Alanine--tRNA ligase of Shewanella loihica (strain ATCC BAA-1088 / PV-4).